Reading from the N-terminus, the 75-residue chain is Small ribosomal subunit protein eS17 (75 aa).

This sequence belongs to the eukaryotic ribosomal protein eS17 family.

The polypeptide is Small ribosomal subunit protein eS17 (Thermoplasma acidophilum (strain ATCC 25905 / DSM 1728 / JCM 9062 / NBRC 15155 / AMRC-C165)).